Reading from the N-terminus, the 191-residue chain is Probable ribosome biogenesis protein RLP24 (191 aa).

S136 is subject to Phosphoserine.

The protein belongs to the eukaryotic ribosomal protein eL24 family. Associated with nucleolar and cytoplasmic pre-60S particles. At the end of biogenesis it dissociates from cytoplasmic pre-60S particles and is likely to be exchanged for its ribosomal homologue, RPL24.

It localises to the nucleus. Its subcellular location is the nucleolus. In terms of biological role, involved in the biogenesis of the 60S ribosomal subunit. Ensures the docking of NOG1 to pre-60S particles. This is Probable ribosome biogenesis protein RLP24 (RpL24-like) from Drosophila melanogaster (Fruit fly).